A 507-amino-acid chain; its full sequence is ATP synthase subunit alpha (507 aa).

168 to 175 (GDRQTGKT) provides a ligand contact to ATP.

The protein belongs to the ATPase alpha/beta chains family. F-type ATPases have 2 components, CF(1) - the catalytic core - and CF(0) - the membrane proton channel. CF(1) has five subunits: alpha(3), beta(3), gamma(1), delta(1), epsilon(1). CF(0) has three main subunits: a(1), b(2) and c(9-12). The alpha and beta chains form an alternating ring which encloses part of the gamma chain. CF(1) is attached to CF(0) by a central stalk formed by the gamma and epsilon chains, while a peripheral stalk is formed by the delta and b chains.

The protein resides in the cell membrane. It catalyses the reaction ATP + H2O + 4 H(+)(in) = ADP + phosphate + 5 H(+)(out). Functionally, produces ATP from ADP in the presence of a proton gradient across the membrane. The alpha chain is a regulatory subunit. In Mesomycoplasma hyopneumoniae (strain 232) (Mycoplasma hyopneumoniae), this protein is ATP synthase subunit alpha.